Here is a 433-residue protein sequence, read N- to C-terminus: UDP-N-acetylmuramoylalanine--D-glutamate ligase (433 aa).

An ATP-binding site is contributed by 125-131 (GTSGKTT).

This sequence belongs to the MurCDEF family.

The protein localises to the cytoplasm. The enzyme catalyses UDP-N-acetyl-alpha-D-muramoyl-L-alanine + D-glutamate + ATP = UDP-N-acetyl-alpha-D-muramoyl-L-alanyl-D-glutamate + ADP + phosphate + H(+). It functions in the pathway cell wall biogenesis; peptidoglycan biosynthesis. In terms of biological role, cell wall formation. Catalyzes the addition of glutamate to the nucleotide precursor UDP-N-acetylmuramoyl-L-alanine (UMA). The polypeptide is UDP-N-acetylmuramoylalanine--D-glutamate ligase (Nitratidesulfovibrio vulgaris (strain ATCC 29579 / DSM 644 / CCUG 34227 / NCIMB 8303 / VKM B-1760 / Hildenborough) (Desulfovibrio vulgaris)).